We begin with the raw amino-acid sequence, 189 residues long: Mercury resistance operon ORF3 (189 aa).

The tat-type signal signal peptide spans 1–27 (MTSPSPTARRTRLRRRTALALAAAATA). In terms of domain architecture, Thioredoxin spans 38–189 (TKANTPATRA…IQDALKKAGA (152 aa)).

Post-translationally, predicted to be exported by the Tat system. The position of the signal peptide cleavage has not been experimentally proven.

Its subcellular location is the secreted. Probable mercury binding protein. The chain is Mercury resistance operon ORF3 from Streptomyces lividans.